The chain runs to 226 residues: uncharacterized protein (226 aa).

This sequence belongs to the IIV-6 350L family.

This is an uncharacterized protein from Invertebrate iridescent virus 3 (IIV-3).